We begin with the raw amino-acid sequence, 336 residues long: Iron-uptake system permease protein FeuC (336 aa).

A run of 9 helical transmembrane segments spans residues 7 to 27, 57 to 77, 85 to 105, 120 to 140, 150 to 170, 191 to 211, 246 to 266, 280 to 300, and 308 to 328; these read LFIA…SFSV, VVMA…IQAI, PGIL…MLLF, MPLF…IFAW, IILV…FLSL, ANWT…PILI, VAII…GLIA, YILP…DFAG, and EVPA…YLLF.

It belongs to the binding-protein-dependent transport system permease family. FecCD subfamily. In terms of assembly, the complex is composed of one ATP-binding protein (YusV), two transmembrane proteins (FeuB and FeuC) and a solute-binding protein (FeuA).

It is found in the cell membrane. Functionally, involved in the uptake of iron. Probably responsible for the translocation of the substrate across the membrane. Part of the ABC transporter complex FeuABC/YusV involved in import of the catecholate siderophores bacillibactin and enterobactin. This Bacillus subtilis (strain 168) protein is Iron-uptake system permease protein FeuC (feuC).